The primary structure comprises 484 residues: NADH-quinone oxidoreductase subunit N (484 aa).

13 helical membrane-spanning segments follow: residues 10-30, 40-60, 74-94, 108-128, 129-149, 163-183, 203-223, 237-257, 272-292, 299-319, 327-347, 370-390, and 404-424; these read LALP…VDLF, FYLT…TQWG, SLGA…LAYT, FYLL…GGSL, LSLY…VAYH, FVLG…VYGA, LMLL…LGAA, PTPV…ALFM, EPML…IAIV, MLAY…TAGT, LFYT…ITVL, YAGV…TVGF, and GHIP…FYYL.

Belongs to the complex I subunit 2 family. As to quaternary structure, NDH-1 is composed of 14 different subunits. Subunits NuoA, H, J, K, L, M, N constitute the membrane sector of the complex.

The protein localises to the cell inner membrane. It catalyses the reaction a quinone + NADH + 5 H(+)(in) = a quinol + NAD(+) + 4 H(+)(out). In terms of biological role, NDH-1 shuttles electrons from NADH, via FMN and iron-sulfur (Fe-S) centers, to quinones in the respiratory chain. The immediate electron acceptor for the enzyme in this species is believed to be ubiquinone. Couples the redox reaction to proton translocation (for every two electrons transferred, four hydrogen ions are translocated across the cytoplasmic membrane), and thus conserves the redox energy in a proton gradient. The polypeptide is NADH-quinone oxidoreductase subunit N (Halorhodospira halophila (strain DSM 244 / SL1) (Ectothiorhodospira halophila (strain DSM 244 / SL1))).